Consider the following 292-residue polypeptide: Phosphotriesterase homology protein (292 aa).

Zn(2+) contacts are provided by histidine 12, histidine 14, and glutamate 125. 148 to 149 (HN) is a beta-D-glucose binding site. A Zn(2+)-binding site is contributed by histidine 158. Beta-D-glucose is bound by residues glycine 176, aspartate 178, and arginine 181. The Zn(2+) site is built by histidine 186 and aspartate 243. 2 residues coordinate beta-D-glucose: aspartate 280 and arginine 284.

The protein belongs to the metallo-dependent hydrolases superfamily. Phosphotriesterase family. Monomer. Requires Zn(2+) as cofactor.

Activity is higher in the enzyme containing Mn(2+) than that containing Zn(2+). In terms of biological role, catalyzes the hydrolysis of phosphorylated glyceryl acetates in which the presence of a phosphate group is required for the enzymatic hydrolysis. Hydrolyzes a dibutyl glycerol derivative suggesting it acts on phosphoglycerol substrates with a butyrate leaving group. Also active with aromatic acetates and propionates. No activity with various sugar phosphates, with various nitrophenylphosphate or nitrophenylphosphonate derivatives, or with phosphorylated or non-phosphorylated sugar lactones tested. Does not hydrolyze non-phosphorylated carboxyesters with long chain leaving groups. No general esterase, aminopeptidase, sulfatase, phosphatase, carbonic anhydrase, phosphodiesterase, and phosphotriesterase activities detected when tested with the following non-specific substrates: p-nitrophenyl acetate, L-alanine nitroanilide, p-nitrophenyl sulfate, bis(p-nitrophenyl) phosphate, paraoxon, and p-nitrophenyl phosphate. This chain is Phosphotriesterase homology protein, found in Escherichia coli (strain K12).